The primary structure comprises 205 residues: Meiotic nuclear division protein 1 homolog (205 aa).

Residue Ser-2 is modified to N-acetylserine. Residues 83-173 (KRKLEVLDSQ…EAANRWTDNI (91 aa)) adopt a coiled-coil conformation.

This sequence belongs to the MND1 family. As to quaternary structure, heterodimer with PSMC3IP/HOP2. MND1-PSMC3IP interacts with DMC1 and RAD51 and binds preferentially to dsDNA.

The protein localises to the nucleus. Its function is as follows. Required for proper homologous chromosome pairing and efficient cross-over and intragenic recombination during meiosis. Stimulates both DMC1- and RAD51-mediated homologous strand assimilation, which is required for the resolution of meiotic double-strand breaks. This Bos taurus (Bovine) protein is Meiotic nuclear division protein 1 homolog.